The primary structure comprises 378 residues: 4-hydroxy-3-methylbut-2-en-1-yl diphosphate synthase (flavodoxin) (378 aa).

[4Fe-4S] cluster is bound by residues C268, C271, C303, and E310.

The protein belongs to the IspG family. [4Fe-4S] cluster serves as cofactor.

It catalyses the reaction (2E)-4-hydroxy-3-methylbut-2-enyl diphosphate + oxidized [flavodoxin] + H2O + 2 H(+) = 2-C-methyl-D-erythritol 2,4-cyclic diphosphate + reduced [flavodoxin]. The protein operates within isoprenoid biosynthesis; isopentenyl diphosphate biosynthesis via DXP pathway; isopentenyl diphosphate from 1-deoxy-D-xylulose 5-phosphate: step 5/6. Converts 2C-methyl-D-erythritol 2,4-cyclodiphosphate (ME-2,4cPP) into 1-hydroxy-2-methyl-2-(E)-butenyl 4-diphosphate. The chain is 4-hydroxy-3-methylbut-2-en-1-yl diphosphate synthase (flavodoxin) from Corynebacterium glutamicum (strain ATCC 13032 / DSM 20300 / JCM 1318 / BCRC 11384 / CCUG 27702 / LMG 3730 / NBRC 12168 / NCIMB 10025 / NRRL B-2784 / 534).